Here is a 468-residue protein sequence, read N- to C-terminus: UDP-N-acetylmuramate--L-alanine ligase (468 aa).

122–128 (GSHGKTT) serves as a coordination point for ATP.

The protein belongs to the MurCDEF family.

Its subcellular location is the cytoplasm. The enzyme catalyses UDP-N-acetyl-alpha-D-muramate + L-alanine + ATP = UDP-N-acetyl-alpha-D-muramoyl-L-alanine + ADP + phosphate + H(+). Its pathway is cell wall biogenesis; peptidoglycan biosynthesis. Its function is as follows. Cell wall formation. The chain is UDP-N-acetylmuramate--L-alanine ligase from Synechococcus sp. (strain CC9902).